Here is a 158-residue protein sequence, read N- to C-terminus: NAD(P)H-quinone oxidoreductase subunit J, chloroplastic (158 aa).

This sequence belongs to the complex I 30 kDa subunit family. In terms of assembly, NDH is composed of at least 16 different subunits, 5 of which are encoded in the nucleus.

It is found in the plastid. The protein resides in the chloroplast thylakoid membrane. The enzyme catalyses a plastoquinone + NADH + (n+1) H(+)(in) = a plastoquinol + NAD(+) + n H(+)(out). The catalysed reaction is a plastoquinone + NADPH + (n+1) H(+)(in) = a plastoquinol + NADP(+) + n H(+)(out). Functionally, NDH shuttles electrons from NAD(P)H:plastoquinone, via FMN and iron-sulfur (Fe-S) centers, to quinones in the photosynthetic chain and possibly in a chloroplast respiratory chain. The immediate electron acceptor for the enzyme in this species is believed to be plastoquinone. Couples the redox reaction to proton translocation, and thus conserves the redox energy in a proton gradient. This Dioscorea elephantipes (Elephant's foot yam) protein is NAD(P)H-quinone oxidoreductase subunit J, chloroplastic.